A 370-amino-acid chain; its full sequence is Cobalt-precorrin-5B C(1)-methyltransferase (370 aa).

It belongs to the CbiD family.

It carries out the reaction Co-precorrin-5B + S-adenosyl-L-methionine = Co-precorrin-6A + S-adenosyl-L-homocysteine. It participates in cofactor biosynthesis; adenosylcobalamin biosynthesis; cob(II)yrinate a,c-diamide from sirohydrochlorin (anaerobic route): step 6/10. Its function is as follows. Catalyzes the methylation of C-1 in cobalt-precorrin-5B to form cobalt-precorrin-6A. This is Cobalt-precorrin-5B C(1)-methyltransferase from Trichormus variabilis (strain ATCC 29413 / PCC 7937) (Anabaena variabilis).